A 289-amino-acid polypeptide reads, in one-letter code: LBH domain-containing protein 1 (289 aa).

Disordered regions lie at residues 1-36 and 205-289; these read MALV…PLWD and EGAE…ASQD. Residues 1-128 enclose the LBH domain; that stretch reads MALVPGRSKE…AEAFFQDQSE (128 aa). The segment covering 15-25 has biased composition (polar residues); the sequence is TRNSPGSSQHP.

As to expression, expressed in bladder cancer tissues (at protein level).

This chain is LBH domain-containing protein 1, found in Homo sapiens (Human).